A 304-amino-acid polypeptide reads, in one-letter code: MSQQLSPINIETKKAISNARLKPLNIHYNESKPTTIQNTGKLVRINFKGGYLSGGFLPNEYVLSSLHIYWGKEDDYGSNHLIDVYKYSGEINLVHWNKKKYSSYEEAKKHDDGLIIISIFLQVSDHKNVYFQKIVNQLDSIRTANTSAPFDSVFYLDNLLPSKLDYFKYLGTTINHSADAVWIIFPTPINIHSDQLSKFRTLLSLSNHEGKPHYITENYRNPYKLNDDTEVYYSGEIIRAATTSPARENYFMRWLSDLRETCFSYYQKYIEGNKTFAIIAIVFVYILTAILFLMSRRYSREKQN.

Residues 1–235 form the Alpha-carbonic anhydrase domain; the sequence is MSQQLSPINI…NDDTEVYYSG (235 aa). Over 1-275 the chain is Virion surface; it reads MSQQLSPINI…YQKYIEGNKT (275 aa). The chain crosses the membrane as a helical span at residues 276-294; the sequence is FAIIAIVFVYILTAILFLM. The Intravirion portion of the chain corresponds to 295–304; that stretch reads SRRYSREKQN.

The protein belongs to the alpha-carbonic anhydrase family. As to quaternary structure, homodimer; disulfide-linked. Post-translationally, apparently non-glycosylated.

It localises to the virion membrane. Functionally, binds to chondroitin sulfate on the cell surface to provide virion attachment to target cell. This chain is Cell surface-binding protein OPG105 (OPG105), found in Homo sapiens (Human).